The chain runs to 212 residues: Leucyl/phenylalanyl-tRNA--protein transferase (212 aa).

It belongs to the L/F-transferase family.

It is found in the cytoplasm. It catalyses the reaction N-terminal L-lysyl-[protein] + L-leucyl-tRNA(Leu) = N-terminal L-leucyl-L-lysyl-[protein] + tRNA(Leu) + H(+). The catalysed reaction is N-terminal L-arginyl-[protein] + L-leucyl-tRNA(Leu) = N-terminal L-leucyl-L-arginyl-[protein] + tRNA(Leu) + H(+). The enzyme catalyses L-phenylalanyl-tRNA(Phe) + an N-terminal L-alpha-aminoacyl-[protein] = an N-terminal L-phenylalanyl-L-alpha-aminoacyl-[protein] + tRNA(Phe). Functionally, functions in the N-end rule pathway of protein degradation where it conjugates Leu, Phe and, less efficiently, Met from aminoacyl-tRNAs to the N-termini of proteins containing an N-terminal arginine or lysine. The chain is Leucyl/phenylalanyl-tRNA--protein transferase from Paracoccus denitrificans (strain Pd 1222).